Consider the following 100-residue polypeptide: Small ribosomal subunit protein uS14 (100 aa).

Belongs to the universal ribosomal protein uS14 family. In terms of assembly, part of the 30S ribosomal subunit. Contacts proteins S3 and S10.

Its function is as follows. Binds 16S rRNA, required for the assembly of 30S particles and may also be responsible for determining the conformation of the 16S rRNA at the A site. The sequence is that of Small ribosomal subunit protein uS14 from Picosynechococcus sp. (strain ATCC 27264 / PCC 7002 / PR-6) (Agmenellum quadruplicatum).